The sequence spans 484 residues: 60S ribosome subunit biogenesis protein NOP8 (484 aa).

The RRM domain maps to 7-83; the sequence is KRIFVGNIFH…NILKVDEAKP (77 aa). A phosphoserine mark is found at Ser234, Ser239, and Ser268. The disordered stretch occupies residues 260 to 330; sequence DKPMTLNDSD…EGDGQEDNEF (71 aa). Over residues 320 to 329 the composition is skewed to acidic residues; that stretch reads DEGDGQEDNE. Ser370 carries the post-translational modification Phosphoserine.

As to quaternary structure, interacts with NIP7 and RRP43. Together with DBP6, URB1, URB2 and RSA3, forms an RNA-independent complex, which is required during early maturation of nascent 60S ribosomal subunits.

It localises to the nucleus. Its subcellular location is the nucleolus. Functionally, required for 60S ribosomal subunit synthesis. May be involved in assembly reactions occurring within late pre-ribosomal particles. This Saccharomyces cerevisiae (strain ATCC 204508 / S288c) (Baker's yeast) protein is 60S ribosome subunit biogenesis protein NOP8 (NOP8).